Here is a 176-residue protein sequence, read N- to C-terminus: Ferritin, liver middle subunit (176 aa).

The 150-residue stretch at 7 to 156 folds into the Ferritin-like diiron domain; it reads QNYHRDCEAA…DFITNLSRMD (150 aa). The Fe cation site is built by Glu-24, Glu-59, His-62, Glu-104, and Gln-138.

The protein belongs to the ferritin family. In liver, forms a heteromer consisting of middle and heavy subunits. The functional molecule forms a roughly spherical shell with a diameter of 12 nm and contains a central cavity into which the insoluble mineral iron core is deposited. In terms of tissue distribution, liver (at protein level).

It carries out the reaction 4 Fe(2+) + O2 + 4 H(+) = 4 Fe(3+) + 2 H2O. Functionally, stores iron in a soluble, non-toxic, readily available form. Important for iron homeostasis. Has ferroxidase activity. Iron is taken up in the ferrous form and deposited as ferric hydroxides after oxidation. This chain is Ferritin, liver middle subunit, found in Trematomus bernacchii (Emerald rockcod).